The primary structure comprises 352 residues: GTPase Obg (352 aa).

Positions M1 to L159 constitute an Obg domain. One can recognise an OBG-type G domain in the interval A160–E330. Residues G166–S173, F191–V195, D213–G216, N280–D283, and S311–V313 contribute to the GTP site. Mg(2+) is bound by residues S173 and T193.

It belongs to the TRAFAC class OBG-HflX-like GTPase superfamily. OBG GTPase family. As to quaternary structure, monomer. Requires Mg(2+) as cofactor.

It localises to the cytoplasm. In terms of biological role, an essential GTPase which binds GTP, GDP and possibly (p)ppGpp with moderate affinity, with high nucleotide exchange rates and a fairly low GTP hydrolysis rate. Plays a role in control of the cell cycle, stress response, ribosome biogenesis and in those bacteria that undergo differentiation, in morphogenesis control. The chain is GTPase Obg from Trichodesmium erythraeum (strain IMS101).